The sequence spans 530 residues: Protein P80 (530 aa).

The first 22 residues, 1-22 (MKVISGLLFFILISCSLFLVQG), serve as a signal peptide directing secretion. A helical membrane pass occupies residues 491 to 511 (MLVAMTFNVALFFAVIAGVLV).

This sequence belongs to the SLC31A transporter family.

It localises to the late endosome membrane. This chain is Protein P80 (p80), found in Dictyostelium discoideum (Social amoeba).